The chain runs to 310 residues: MNHLTGLSRLSADSITGLLDTAAGFKQTLRSPNASFSPTLKNRRIALVFFENSTRTRFSFEIAARNLGAGTLGFSAASSSVSKGETLSDTIKNLEAMQVDAFVLRHPSSGSAKLISRITPKPVINAGDGSNEHPTQALLDMFTLREHFGSLKGLKVTIIGDVLHSRVARSNIYGLLRAGAEVGLCGPVTLIPPDAEKLGVRLFTDLDRAIAWADTAIVLRLQLERASGTYLPSLEEYSRHYGLTDERLERTGKHLLVLHPGPINREIEISNHVADRIQPPGYSKSMLLEQVTNGIAIRMAVLETLLGGTP.

Carbamoyl phosphate contacts are provided by Arg55 and Thr56. Lys83 contacts L-aspartate. Residues Arg105, His133, and Gln136 each contribute to the carbamoyl phosphate site. L-aspartate is bound by residues Arg166 and Arg220. Positions 261 and 262 each coordinate carbamoyl phosphate.

The protein belongs to the aspartate/ornithine carbamoyltransferase superfamily. ATCase family. In terms of assembly, heterododecamer (2C3:3R2) of six catalytic PyrB chains organized as two trimers (C3), and six regulatory PyrI chains organized as three dimers (R2).

The enzyme catalyses carbamoyl phosphate + L-aspartate = N-carbamoyl-L-aspartate + phosphate + H(+). It participates in pyrimidine metabolism; UMP biosynthesis via de novo pathway; (S)-dihydroorotate from bicarbonate: step 2/3. In terms of biological role, catalyzes the condensation of carbamoyl phosphate and aspartate to form carbamoyl aspartate and inorganic phosphate, the committed step in the de novo pyrimidine nucleotide biosynthesis pathway. The protein is Aspartate carbamoyltransferase catalytic subunit of Chlorobium phaeovibrioides (strain DSM 265 / 1930) (Prosthecochloris vibrioformis (strain DSM 265)).